A 207-amino-acid chain; its full sequence is Cytochrome c biogenesis ATP-binding export protein CcmA (207 aa).

The ABC transporter domain maps to 4 to 207 (LEVRELLCER…RISLTQTRAV (204 aa)). 36 to 43 (GSNGAGKT) contacts ATP.

Belongs to the ABC transporter superfamily. CcmA exporter (TC 3.A.1.107) family. As to quaternary structure, the complex is composed of two ATP-binding proteins (CcmA) and two transmembrane proteins (CcmB).

It is found in the cell inner membrane. The catalysed reaction is heme b(in) + ATP + H2O = heme b(out) + ADP + phosphate + H(+). Its function is as follows. Part of the ABC transporter complex CcmAB involved in the biogenesis of c-type cytochromes; once thought to export heme, this seems not to be the case, but its exact role is uncertain. Responsible for energy coupling to the transport system. This is Cytochrome c biogenesis ATP-binding export protein CcmA from Shigella dysenteriae serotype 1 (strain Sd197).